The primary structure comprises 602 residues: Na(+)/dicarboxylate cotransporter 3 (602 aa).

The Cytoplasmic portion of the chain corresponds to 1–16 (MAALAAAAKKVWSARR). A helical transmembrane segment spans residues 17 to 37 (LLVLLFTPLALLPVVFALPPK). At 38–55 (EGRCLFVILLMAVYWCTE) the chain is on the extracellular side. A helical membrane pass occupies residues 56 to 76 (ALPLSVTALLPIVLFPFMGIL). Topologically, residues 77–82 (PSNKVC) are cytoplasmic. Residues 83–103 (PQYFLDTNFLFLSGLIMASAI) form a helical membrane-spanning segment. Residues 104-137 (EEWNLHRRIALKILMLVGVQPARLILGMMVTTSF) are Extracellular-facing. Residues 138–158 (LSMWLSNTASTAMMLPIANAI) form a helical membrane-spanning segment. The Cytoplasmic segment spans residues 159 to 229 (LKSLFGQKEV…SRKEDEYRRN (71 aa)). A helical transmembrane segment spans residues 230–250 (IWKGFLISIPYSASIGGTATL). Topologically, residues 251–278 (TGTAPNLILLGQLKSFFPQCDVVNFGSW) are extracellular. Residues 279-299 (FIFAFPLMLLFLLAGWLWISF) traverse the membrane as a helical segment. The Cytoplasmic segment spans residues 300–336 (LYGGLSFRGWRKNKSEIRTNAEDRARAVIREEYQNLG). A helical transmembrane segment spans residues 337–357 (PIKFAEQAVFILFCMFAILLF). Over 358 to 372 (TRDPKFIPGWASLFN) the chain is Extracellular. The chain crosses the membrane as a helical span at residues 373-393 (PGFLSDAVTGVAIVTILFFFP). Over 394 to 422 (SQRPSLKWWFDFKAPNTETEPLLTWKKAQ) the chain is Cytoplasmic. Positions 423–443 (ETVPWNIILLLGGGFAMAKGC) form an intramembrane region, helical. The Cytoplasmic segment spans residues 444-461 (EESGLSVWIGGQLHPLEN). The chain crosses the membrane as a helical span at residues 462–482 (VPPALAVLLITVVIAFFTEFA). Topologically, residues 483 to 505 (SNTATIIIFLPVLAELAIRLRVH) are extracellular. The helical transmembrane segment at 506–526 (PLYLMIPGTVGCSFAFMLPVS) threads the bilayer. Residues 527–546 (TPPNSIAFASGHLLVKDMVR) lie on the Cytoplasmic side of the membrane. Residues 547–567 (TGLLMNLMGVLLLSLAMNTWA) traverse the membrane as a helical segment. The Extracellular portion of the chain corresponds to 568–602 (QTIFQLGTFPDWADMYSVNVTALPPTLANDTFRTL). N-linked (GlcNAc...) asparagine glycosylation is found at asparagine 586 and asparagine 596.

This sequence belongs to the SLC13A/DASS transporter (TC 2.A.47) family. NADC subfamily. As to expression, expression is highest in kidney. Detected in placenta, brain, liver and pancreas.

It is found in the cell membrane. It catalyses the reaction succinate(out) + 3 Na(+)(out) = succinate(in) + 3 Na(+)(in). The catalysed reaction is 2-oxoglutarate(out) + 3 Na(+)(out) = 2-oxoglutarate(in) + 3 Na(+)(in). It carries out the reaction N-acetyl-L-aspartate(out) + 3 Na(+)(out) = N-acetyl-L-aspartate(in) + 3 Na(+)(in). The enzyme catalyses glutarate(out) + 3 Na(+)(out) = glutarate(in) + 3 Na(+)(in). It catalyses the reaction fumarate(out) + 3 Na(+)(out) = fumarate(in) + 3 Na(+)(in). The catalysed reaction is malate(out) + 3 Na(+)(out) = malate(in) + 3 Na(+)(in). It carries out the reaction 2,2-dimethylsuccinate(out) + 3 Na(+)(out) = 2,2-dimethylsuccinate(in) + 3 Na(+)(in). The enzyme catalyses 2,3-dimethylsuccinate(out) + 3 Na(+)(out) = 2,3-dimethylsuccinate(in) + 3 Na(+)(in). It catalyses the reaction itaconate(out) + 3 Na(+)(out) = itaconate(in) + 3 Na(+)(in). Its activity is regulated as follows. Li(+) decreases succinate transport in the presence of Na(+). High-affinity sodium-dicarboxylate cotransporter that accepts a range of substrates with 4-6 carbon atoms, such as the citric acid cycle intermediates succinate and alpha-ketoglutarate (2-oxoglutarate), as well as other compounds including N-acetyl-L-aspartate. Transports the dicarboxylate into the cell with a probable stoichiometry of 3 Na(+) for 1 divalent dicarboxylate, rendering the process electrogenic. Can transport citrate in a Na(+)-dependent manner, recognizing the divalent form of citrate rather than the trivalent form which is normally found in blood. Imports itaconate in hepatocytes leading to activation of TFEB-dependent lysosomal biogenesis involved in antibacterial innate immune response. This chain is Na(+)/dicarboxylate cotransporter 3 (SLC13A3), found in Homo sapiens (Human).